The following is a 246-amino-acid chain: 1-(5-phosphoribosyl)-5-[(5-phosphoribosylamino)methylideneamino] imidazole-4-carboxamide isomerase (246 aa).

Asp-10 serves as the catalytic Proton acceptor. Asp-135 (proton donor) is an active-site residue.

The protein belongs to the HisA/HisF family.

Its subcellular location is the cytoplasm. The enzyme catalyses 1-(5-phospho-beta-D-ribosyl)-5-[(5-phospho-beta-D-ribosylamino)methylideneamino]imidazole-4-carboxamide = 5-[(5-phospho-1-deoxy-D-ribulos-1-ylimino)methylamino]-1-(5-phospho-beta-D-ribosyl)imidazole-4-carboxamide. Its pathway is amino-acid biosynthesis; L-histidine biosynthesis; L-histidine from 5-phospho-alpha-D-ribose 1-diphosphate: step 4/9. This chain is 1-(5-phosphoribosyl)-5-[(5-phosphoribosylamino)methylideneamino] imidazole-4-carboxamide isomerase, found in Methanococcoides burtonii (strain DSM 6242 / NBRC 107633 / OCM 468 / ACE-M).